The chain runs to 438 residues: Serine carboxypeptidase-like 5 (438 aa).

Positions 1–28 are cleaved as a signal peptide; that stretch reads MANYISSVLKSLLLLLHLVFLIQQHVDS. 3 disulfides stabilise this stretch: Cys87/Cys328, Cys251/Cys263, and Cys287/Cys294. Asn108 carries N-linked (GlcNAc...) asparagine glycosylation. Residue Ser183 is part of the active site. The N-linked (GlcNAc...) asparagine glycan is linked to Asn347. Residue Asp363 is part of the active site. Asn379 carries an N-linked (GlcNAc...) asparagine glycan. Residue His416 is part of the active site.

It belongs to the peptidase S10 family. Expressed in seedlings, roots, and siliques.

It is found in the secreted. In terms of biological role, probable carboxypeptidase. The protein is Serine carboxypeptidase-like 5 (SCPL5) of Arabidopsis thaliana (Mouse-ear cress).